A 1679-amino-acid polypeptide reads, in one-letter code: Lysophospholipase NTE1 (1679 aa).

Low complexity predominate over residues 1–20; that stretch reads MRSMNCTTNNTNNTGQNTKN. The tract at residues 1 to 21 is disordered; sequence MRSMNCTTNNTNNTGQNTKNS. At 1–49 the chain is on the cytoplasmic side; sequence MRSMNCTTNNTNNTGQNTKNSLGSSFNSSNYTSYRFQTCLTDQIISEAQ. The chain crosses the membrane as a helical span at residues 50-70; sequence TWSLSSLFNFSWVVSYFVMGA. Over 71 to 103 the chain is Lumenal; the sequence is SRMIFRYGWYLATLSLLRIPKWIFFKLHHVQFT. A helical transmembrane segment spans residues 104-124; the sequence is LSFWLILFALAVIVFVTYTIM. Residues 125–1679 lie on the Cytoplasmic side of the membrane; sequence KERILSQYKR…EFLLHRRNSI (1555 aa). Residues 261–274 show a composition bias toward basic and acidic residues; it reads SDKDHGDETDHSDT. Positions 261–304 are disordered; sequence SDKDHGDETDHSDTDGLDDQDRDEEDEEEDDDIDNYDTKSCSSN. Residues 275–295 show a composition bias toward acidic residues; it reads DGLDDQDRDEEDEEEDDDIDN. Phosphoserine occurs at positions 300 and 312. Disordered regions lie at residues 498-527 and 586-672; these read SSGSADLEPKPKNSNASSKLKKPPKAKPSD and DILS…VSPR. 2 stretches are compositionally biased toward polar residues: residues 592–606 and 630–652; these read PIHNNNRNKSNGINT and FSSLSPELRNAQLSTSPLSLDNT. Serine 632, serine 634, serine 653, serine 661, serine 670, serine 680, and serine 739 each carry phosphoserine. Positions 775 to 800 are disordered; the sequence is KEYTISNKRHNKSKSQDKKKPRAYKE. The segment covering 788 to 800 has biased composition (basic and acidic residues); it reads KSQDKKKPRAYKE. A Phosphothreonine modification is found at threonine 803. Residues 803–947 and 943–1074 contribute to the a nucleoside 3',5'-cyclic phosphate site; these read TPNL…LTKL and SLTK…VAKK. Positions 855–882 are disordered; that stretch reads SSSVVSSMSKPEQVSAQSSHKGENPHHT. The span at 862–873 shows a compositional bias: polar residues; that stretch reads MSKPEQVSAQSS. The region spanning 1373 to 1537 is the PNPLA domain; sequence LVLGGGGARG…VDNLPVTEMR (165 aa). The GXGXXG motif lies at 1377–1382; it reads GGGARG. The GXSXG motif lies at 1404 to 1408; that stretch reads GTSIG. Residue serine 1406 is the Nucleophile of the active site. Aspartate 1524 acts as the Proton acceptor in catalysis. A DGA/G motif is present at residues 1524–1526; it reads DGG.

It belongs to the NTE family.

The protein resides in the endoplasmic reticulum membrane. It localises to the lipid droplet. It catalyses the reaction a 1-acyl-sn-glycero-3-phosphocholine + H2O = sn-glycerol 3-phosphocholine + a fatty acid + H(+). It carries out the reaction a 1,2-diacyl-sn-glycero-3-phosphocholine + 2 H2O = sn-glycerol 3-phosphocholine + 2 a carboxylate + 2 H(+). Its activity is regulated as follows. Positively regulated by SEC14. Inhibited by organophosphorus esters in the order phenyl saligenin phosphate (PSP) &gt; phenyldipentyl phosphinate (PDPP) = diisopropyl fluorophosphate (DFP) &gt; and paraoxon (PXN). Its function is as follows. Intracellular phospholipase B that catalyzes the double deacylation of phosphatidylcholine (PC) to glycerophosphocholine (GroPCho). Plays an important role in membrane lipid homeostasis. Responsible for the rapid PC turnover in response to inositol, elevated temperatures, or when choline is present in the growth medium. NTE1 activity impacts the repressing transcriptional activity of OPI1, the main regulator of phospholipid synthesis gene transcription. The chain is Lysophospholipase NTE1 (NTE1) from Saccharomyces cerevisiae (strain ATCC 204508 / S288c) (Baker's yeast).